The chain runs to 485 residues: UDP-glycosyltransferase 91D1 (485 aa).

UDP-alpha-D-glucose is bound by residues Ser-296, Trp-355–Ala-356, His-373–Glu-381, and Phe-395–Gln-398.

This sequence belongs to the UDP-glycosyltransferase family.

In terms of biological role, may glycosylate diterpenes or flavonols in leaves. This chain is UDP-glycosyltransferase 91D1, found in Stevia rebaudiana (Stevia).